The sequence spans 156 residues: Small ribosomal subunit protein uS7 (156 aa).

This sequence belongs to the universal ribosomal protein uS7 family. As to quaternary structure, part of the 30S ribosomal subunit. Contacts proteins S9 and S11.

One of the primary rRNA binding proteins, it binds directly to 16S rRNA where it nucleates assembly of the head domain of the 30S subunit. Is located at the subunit interface close to the decoding center, probably blocks exit of the E-site tRNA. This Brucella abortus (strain S19) protein is Small ribosomal subunit protein uS7.